Reading from the N-terminus, the 394-residue chain is Subtilisin-like protease CPC735_005570 (394 aa).

Residues 1–21 (MRAIISVALFLSLSLLSAVNA) form the signal peptide. The propeptide occupies 22 to 114 (AEILSAGDTD…IEHDRIANAR (93 aa)). Positions 37–110 (SYIVVMRDGL…AVKYIEHDRI (74 aa)) constitute an Inhibitor I9 domain. The Peptidase S8 domain occupies 123-394 (GWNLARISHK…RLLLYNGSGR (272 aa)). Catalysis depends on charge relay system residues D155 and H186. N-linked (GlcNAc...) asparagine glycans are attached at residues N216 and N247. S340 serves as the catalytic Charge relay system. N382 and N390 each carry an N-linked (GlcNAc...) asparagine glycan.

Belongs to the peptidase S8 family.

It is found in the secreted. Functionally, secreted subtilisin-like serine protease with keratinolytic activity that contributes to pathogenicity. The polypeptide is Subtilisin-like protease CPC735_005570 (Coccidioides posadasii (strain C735) (Valley fever fungus)).